Reading from the N-terminus, the 120-residue chain is Chaperonin GroEL (120 aa).

D23 to T27 contributes to the ATP binding site.

Belongs to the chaperonin (HSP60) family. In terms of assembly, forms a cylinder of 14 subunits composed of two heptameric rings stacked back-to-back. Interacts with the co-chaperonin GroES.

The protein localises to the cytoplasm. It catalyses the reaction ATP + H2O + a folded polypeptide = ADP + phosphate + an unfolded polypeptide.. Functionally, together with its co-chaperonin GroES, plays an essential role in assisting protein folding. The GroEL-GroES system forms a nano-cage that allows encapsulation of the non-native substrate proteins and provides a physical environment optimized to promote and accelerate protein folding. The chain is Chaperonin GroEL from Mycobacterium asiaticum.